A 461-amino-acid chain; its full sequence is ATP synthase subunit beta (461 aa).

ATP is bound at residue 151–158 (GGAGVGKT).

The protein belongs to the ATPase alpha/beta chains family. F-type ATPases have 2 components, CF(1) - the catalytic core - and CF(0) - the membrane proton channel. CF(1) has five subunits: alpha(3), beta(3), gamma(1), delta(1), epsilon(1). CF(0) has three main subunits: a(1), b(2) and c(9-12). The alpha and beta chains form an alternating ring which encloses part of the gamma chain. CF(1) is attached to CF(0) by a central stalk formed by the gamma and epsilon chains, while a peripheral stalk is formed by the delta and b chains.

Its subcellular location is the cell inner membrane. The catalysed reaction is ATP + H2O + 4 H(+)(in) = ADP + phosphate + 5 H(+)(out). Functionally, produces ATP from ADP in the presence of a proton gradient across the membrane. The catalytic sites are hosted primarily by the beta subunits. In Idiomarina loihiensis (strain ATCC BAA-735 / DSM 15497 / L2-TR), this protein is ATP synthase subunit beta.